A 90-amino-acid polypeptide reads, in one-letter code: Small cell adhesion glycoprotein homolog (90 aa).

Residues 1–27 (MSILPTTDSVPEEAITKASGDVDGFEK) lie on the Extracellular side of the membrane. A helical; Signal-anchor for type III membrane protein transmembrane segment spans residues 28 to 48 (AVVGGVIAAVFITLITVVVLI). The Cytoplasmic portion of the chain corresponds to 49 to 90 (TVYLYKHKGSYRTNENLEDVEASKTLQMEDSALTPEKKEYFM).

The protein belongs to the SMAGP family.

Its subcellular location is the cell membrane. It localises to the cytoplasmic vesicle membrane. May play a role in epithelial cell-cell contacts. This chain is Small cell adhesion glycoprotein homolog (smagp), found in Xenopus tropicalis (Western clawed frog).